The following is a 379-amino-acid chain: Cathepsin B-like cysteine proteinase 6 (379 aa).

The first 16 residues, 1-16 (MKTLLFLSCIVVAAYC), serve as a signal peptide directing secretion. Residues 17 to 104 (ACNDNLESVL…LSKTKDLDLD (88 aa)) constitute a propeptide that is removed on maturation. 6 disulfides stabilise this stretch: Cys118–Cys147, Cys130–Cys174, Cys166–Cys233, Cys167–Cys170, Cys203–Cys237, and Cys211–Cys223. Cys133 is an active-site residue. A glycan (N-linked (GlcNAc...) asparagine) is linked at Asn196. N-linked (GlcNAc...) asparagine; atypical glycosylation occurs at Asn201. Active-site residues include His305 and Asn325.

Belongs to the peptidase C1 family.

The protein is Cathepsin B-like cysteine proteinase 6 (cpr-6) of Caenorhabditis elegans.